Here is a 142-residue protein sequence, read N- to C-terminus: Anti-sigma F factor (142 aa).

This sequence belongs to the anti-sigma-factor family.

The catalysed reaction is L-seryl-[protein] + ATP = O-phospho-L-seryl-[protein] + ADP + H(+). It catalyses the reaction L-threonyl-[protein] + ATP = O-phospho-L-threonyl-[protein] + ADP + H(+). Binds to sigma F and blocks its ability to form an RNA polymerase holoenzyme (E-sigma F). Phosphorylates SpoIIAA on a serine residue. This phosphorylation may enable SpoIIAA to act as an anti-anti-sigma factor that counteracts SpoIIAB and thus releases sigma F from inhibition. This Clostridium kluyveri (strain NBRC 12016) protein is Anti-sigma F factor.